Here is a 205-residue protein sequence, read N- to C-terminus: High frequency lysogenization protein HflD homolog (205 aa).

It belongs to the HflD family.

It localises to the cytoplasm. The protein localises to the cell inner membrane. The protein is High frequency lysogenization protein HflD homolog of Haemophilus influenzae (strain ATCC 51907 / DSM 11121 / KW20 / Rd).